The chain runs to 635 residues: Extracellular metalloproteinase 1 (635 aa).

A signal peptide spans 1 to 19 (MHGLLLAAGLLSLPLHVLA). A propeptide spanning residues 20 to 246 (HPQPSTSTSL…VHNVVDYVAH (227 aa)) is cleaved from the precursor. N-linked (GlcNAc...) asparagine glycosylation occurs at Asn-287. Zn(2+) is bound at residue His-430. Glu-431 is an active-site residue. His-434 lines the Zn(2+) pocket. 3 N-linked (GlcNAc...) asparagine glycosylation sites follow: Asn-475, Asn-594, and Asn-623.

It belongs to the peptidase M36 family. Requires Zn(2+) as cofactor.

Its subcellular location is the secreted. In terms of biological role, secreted metalloproteinase probably acting as a virulence factor. The chain is Extracellular metalloproteinase 1 (MEP1) from Trichophyton rubrum (Athlete's foot fungus).